Here is a 338-residue protein sequence, read N- to C-terminus: MSDWQRRHILSLADFSPVEYEMVLRTAAGFAEVLQRRNKKVPTLQGQVVTTLFFEPSTRTRSSFELAAKRLSADTINFAASSSSLSKGETILDTARTYLAMGSDIMVVRHAQAGVPQAIAREMERLGTEVRVLNAGDGQHEHPSQALLDLFTICSVIQPEQPSLGAIAGKKIAIVGDILHSRVARSNIWSLTAAGAEVHLAAPPTLLPPEFAQFANTPIPGSGLPRQLQIHWQLESALENADFVMTLRLQQERMSQSLLPSLREYHREFGLTRDRLRVCQPSVKLLHPGPVNRGVELSSDLMEDESISLIQPQVTNGVAVRMALLYLIGAAVPAAIPA.

The carbamoyl phosphate site is built by R59 and T60. K87 provides a ligand contact to L-aspartate. The carbamoyl phosphate site is built by R109, H142, and Q145. L-aspartate-binding residues include R182 and R248. Carbamoyl phosphate contacts are provided by G289 and P290.

This sequence belongs to the aspartate/ornithine carbamoyltransferase superfamily. ATCase family. Heterododecamer (2C3:3R2) of six catalytic PyrB chains organized as two trimers (C3), and six regulatory PyrI chains organized as three dimers (R2).

It catalyses the reaction carbamoyl phosphate + L-aspartate = N-carbamoyl-L-aspartate + phosphate + H(+). The protein operates within pyrimidine metabolism; UMP biosynthesis via de novo pathway; (S)-dihydroorotate from bicarbonate: step 2/3. In terms of biological role, catalyzes the condensation of carbamoyl phosphate and aspartate to form carbamoyl aspartate and inorganic phosphate, the committed step in the de novo pyrimidine nucleotide biosynthesis pathway. In Synechococcus elongatus (strain ATCC 33912 / PCC 7942 / FACHB-805) (Anacystis nidulans R2), this protein is Aspartate carbamoyltransferase catalytic subunit.